A 677-amino-acid polypeptide reads, in one-letter code: Methionine--tRNA ligase (677 aa).

The 'HIGH' region motif lies at 15-25 (PYANGSIHLGH). The Zn(2+) site is built by cysteine 146, cysteine 149, cysteine 159, and cysteine 162. Positions 333-337 (KMSKS) match the 'KMSKS' region motif. Lysine 336 provides a ligand contact to ATP. Residues 575–677 (DFAKVDLRVA…AGAKPGHQVK (103 aa)) enclose the tRNA-binding domain.

It belongs to the class-I aminoacyl-tRNA synthetase family. MetG type 1 subfamily. Homodimer. Zn(2+) is required as a cofactor.

The protein resides in the cytoplasm. The catalysed reaction is tRNA(Met) + L-methionine + ATP = L-methionyl-tRNA(Met) + AMP + diphosphate. Functionally, is required not only for elongation of protein synthesis but also for the initiation of all mRNA translation through initiator tRNA(fMet) aminoacylation. This Shigella sonnei (strain Ss046) protein is Methionine--tRNA ligase.